A 1342-amino-acid chain; its full sequence is DNA-directed RNA polymerase subunit beta (1342 aa).

N6-acetyllysine is present on residues Lys-1022 and Lys-1200.

The protein belongs to the RNA polymerase beta chain family. In terms of assembly, the RNAP catalytic core consists of 2 alpha, 1 beta, 1 beta' and 1 omega subunit. When a sigma factor is associated with the core the holoenzyme is formed, which can initiate transcription.

The enzyme catalyses RNA(n) + a ribonucleoside 5'-triphosphate = RNA(n+1) + diphosphate. In terms of biological role, DNA-dependent RNA polymerase catalyzes the transcription of DNA into RNA using the four ribonucleoside triphosphates as substrates. The sequence is that of DNA-directed RNA polymerase subunit beta from Escherichia fergusonii (strain ATCC 35469 / DSM 13698 / CCUG 18766 / IAM 14443 / JCM 21226 / LMG 7866 / NBRC 102419 / NCTC 12128 / CDC 0568-73).